We begin with the raw amino-acid sequence, 235 residues long: Isoprenyl transferase (235 aa).

D21 is an active-site residue. Residue D21 coordinates Mg(2+). Substrate contacts are provided by residues 22-25, W26, K34, H38, and 66-68; these read GNAR and SSE. Catalysis depends on N69, which acts as the Proton acceptor. Substrate contacts are provided by residues W70, R72, R183, and 189–191; that span reads RIS. E202 provides a ligand contact to Mg(2+).

This sequence belongs to the UPP synthase family. As to quaternary structure, homodimer. It depends on Mg(2+) as a cofactor.

Catalyzes the condensation of isopentenyl diphosphate (IPP) with allylic pyrophosphates generating different type of terpenoids. The sequence is that of Isoprenyl transferase from Rickettsia felis (strain ATCC VR-1525 / URRWXCal2) (Rickettsia azadi).